A 1045-amino-acid polypeptide reads, in one-letter code: Desmoglein-1 (1045 aa).

The first 23 residues, 1–23, serve as a signal peptide directing secretion; that stretch reads MNWPFFRTAAVLFIFLVVLEVNS. Positions 24 to 49 are excised as a propeptide; it reads EFRIQVRDYNTKNGTIKWHSIRRQKR. N-linked (GlcNAc...) asparagine glycans are attached at residues asparagine 36, asparagine 110, and asparagine 180. 4 Cadherin domains span residues 50-158, 159-270, 271-385, and 386-496; these read EWIK…PVFS, MSTF…PYME, LPSN…GSVF, and RPGS…TDGA. Residues 50-546 are Extracellular-facing; the sequence is EWIKFAAACR…HPLDNVHFGP (497 aa). A helical transmembrane segment spans residues 547–567; that stretch reads AGIGLLIMGFLVLGLVPFLLM. The Cytoplasmic portion of the chain corresponds to 568–1045; that stretch reads YCDCGGAPGG…TKYSTVQYTK (478 aa). 5 Desmoglein repeat repeats span residues 814–840, 841–870, 871–900, 901–928, and 929–957; these read TYPS…TMTE, SYTT…ERVV, GPIS…ERVI, APNS…ERVI, and RPTS…ERVV. The interval 1019 to 1045 is disordered; the sequence is FSNTLGSASPTTTRSRITKYSTVQYTK. Positions 1020–1045 are enriched in polar residues; the sequence is SNTLGSASPTTTRSRITKYSTVQYTK.

In terms of assembly, binds to JUP/plakoglobin. Interacts with PKP2. Interacts with DSC3; there is evidence to suggest that the interaction promotes cell-cell adhesion of keratinocytes.

Its subcellular location is the cell membrane. It localises to the cell junction. The protein resides in the desmosome. It is found in the cytoplasm. The protein localises to the nucleus. In terms of biological role, component of intercellular desmosome junctions. Involved in the interaction of plaque proteins and intermediate filaments mediating cell-cell adhesion. The protein is Desmoglein-1 (DSG1) of Sus scrofa (Pig).